The following is a 279-amino-acid chain: Tryptophan synthase alpha chain (279 aa).

Catalysis depends on proton acceptor residues E50 and D61.

The protein belongs to the TrpA family. As to quaternary structure, tetramer of two alpha and two beta chains.

The catalysed reaction is (1S,2R)-1-C-(indol-3-yl)glycerol 3-phosphate + L-serine = D-glyceraldehyde 3-phosphate + L-tryptophan + H2O. Its pathway is amino-acid biosynthesis; L-tryptophan biosynthesis; L-tryptophan from chorismate: step 5/5. In terms of biological role, the alpha subunit is responsible for the aldol cleavage of indoleglycerol phosphate to indole and glyceraldehyde 3-phosphate. The protein is Tryptophan synthase alpha chain of Rhizobium meliloti (strain 1021) (Ensifer meliloti).